The primary structure comprises 190 residues: Potassium-transporting ATPase KdpC subunit (190 aa).

A helical transmembrane segment spans residues 10–30 (TFLFLLLITGGVYPLLTTALG).

This sequence belongs to the KdpC family. In terms of assembly, the system is composed of three essential subunits: KdpA, KdpB and KdpC.

The protein localises to the cell inner membrane. Part of the high-affinity ATP-driven potassium transport (or Kdp) system, which catalyzes the hydrolysis of ATP coupled with the electrogenic transport of potassium into the cytoplasm. This subunit acts as a catalytic chaperone that increases the ATP-binding affinity of the ATP-hydrolyzing subunit KdpB by the formation of a transient KdpB/KdpC/ATP ternary complex. In Escherichia coli O7:K1 (strain IAI39 / ExPEC), this protein is Potassium-transporting ATPase KdpC subunit.